Consider the following 189-residue polypeptide: Probable nicotinate-nucleotide adenylyltransferase (189 aa).

Belongs to the NadD family.

The enzyme catalyses nicotinate beta-D-ribonucleotide + ATP + H(+) = deamido-NAD(+) + diphosphate. It participates in cofactor biosynthesis; NAD(+) biosynthesis; deamido-NAD(+) from nicotinate D-ribonucleotide: step 1/1. Its function is as follows. Catalyzes the reversible adenylation of nicotinate mononucleotide (NaMN) to nicotinic acid adenine dinucleotide (NaAD). This chain is Probable nicotinate-nucleotide adenylyltransferase, found in Staphylococcus aureus (strain bovine RF122 / ET3-1).